The primary structure comprises 304 residues: tRNA uridine(34) hydroxylase (304 aa).

Positions 124–219 (QDEETLLIDT…YLETIPKEES (96 aa)) constitute a Rhodanese domain. Catalysis depends on cysteine 179, which acts as the Cysteine persulfide intermediate.

This sequence belongs to the TrhO family.

The catalysed reaction is uridine(34) in tRNA + AH2 + O2 = 5-hydroxyuridine(34) in tRNA + A + H2O. Catalyzes oxygen-dependent 5-hydroxyuridine (ho5U) modification at position 34 in tRNAs. This Bartonella quintana (strain Toulouse) (Rochalimaea quintana) protein is tRNA uridine(34) hydroxylase.